The chain runs to 429 residues: Saccharopine dehydrogenase-like oxidoreductase (429 aa).

Ala2 is modified (N-acetylalanine). A Phosphoserine modification is found at Ser217.

This sequence belongs to the saccharopine dehydrogenase family.

The polypeptide is Saccharopine dehydrogenase-like oxidoreductase (SCCPDH) (Bos taurus (Bovine)).